A 190-amino-acid chain; its full sequence is Elongation factor P-like protein (190 aa).

Belongs to the elongation factor P family.

The chain is Elongation factor P-like protein from Photorhabdus laumondii subsp. laumondii (strain DSM 15139 / CIP 105565 / TT01) (Photorhabdus luminescens subsp. laumondii).